The primary structure comprises 335 residues: MYSLIRKCLFSMDAETAHNFSIQALKLAGKLPINVLPMPLNPVEVMGLQFKNPIGLAAGADKNGEAIDGFGKLGFGFIEVGTVTPVAQDGNPKPRQFRILEAEGIINRNGFNNLGVDVLVENVKKAKYDGIIGINIGKNAVTPIERALDDYQICLRKVYEHADYITVNISSPNTKNLRTLQYGEALDDLLRSLKSEQESLSQKFNRYKPLVLKIAPDLTDEEIASVADGLIRHKIDGVIAGNTTLSRDPVVGLKNAEQQGGLSGKPLNTLSTRLISTLAEELNGTLPIIGSGGIHSVASGQEKIDAGASLLQVYSAMIYQGLALIQNLAKHIQVR.

FMN-binding positions include 58–62 (AGADK) and Thr82. Lys62 lines the substrate pocket. 107 to 111 (NRNGF) contributes to the substrate binding site. FMN contacts are provided by Asn135 and Asn168. Asn168 provides a ligand contact to substrate. Ser171 functions as the Nucleophile in the catalytic mechanism. Asn173 is a binding site for substrate. FMN-binding residues include Lys213 and Gly241. Position 242–243 (242–243 (NT)) interacts with substrate. Residues Gly264, Gly293, and 314–315 (YS) each bind FMN.

The protein belongs to the dihydroorotate dehydrogenase family. Type 2 subfamily. As to quaternary structure, monomer. FMN serves as cofactor.

Its subcellular location is the cell membrane. It carries out the reaction (S)-dihydroorotate + a quinone = orotate + a quinol. It participates in pyrimidine metabolism; UMP biosynthesis via de novo pathway; orotate from (S)-dihydroorotate (quinone route): step 1/1. In terms of biological role, catalyzes the conversion of dihydroorotate to orotate with quinone as electron acceptor. This is Dihydroorotate dehydrogenase (quinone) from Actinobacillus pleuropneumoniae serotype 7 (strain AP76).